A 571-amino-acid polypeptide reads, in one-letter code: Coiled-coil domain-containing protein 22 homolog (571 aa).

Coiled coils occupy residues Met406–Ala434 and Cys509–Arg571.

Belongs to the CCDC22 family.

The sequence is that of Coiled-coil domain-containing protein 22 homolog from Culex quinquefasciatus (Southern house mosquito).